A 258-amino-acid chain; its full sequence is Thiazole synthase (258 aa).

Lys-98 serves as the catalytic Schiff-base intermediate with DXP. Residues Gly-159, 185–186, and 207–208 contribute to the 1-deoxy-D-xylulose 5-phosphate site; these read AG and NT.

The protein belongs to the ThiG family. As to quaternary structure, homotetramer. Forms heterodimers with either ThiH or ThiS.

It localises to the cytoplasm. The enzyme catalyses [ThiS sulfur-carrier protein]-C-terminal-Gly-aminoethanethioate + 2-iminoacetate + 1-deoxy-D-xylulose 5-phosphate = [ThiS sulfur-carrier protein]-C-terminal Gly-Gly + 2-[(2R,5Z)-2-carboxy-4-methylthiazol-5(2H)-ylidene]ethyl phosphate + 2 H2O + H(+). The protein operates within cofactor biosynthesis; thiamine diphosphate biosynthesis. Functionally, catalyzes the rearrangement of 1-deoxy-D-xylulose 5-phosphate (DXP) to produce the thiazole phosphate moiety of thiamine. Sulfur is provided by the thiocarboxylate moiety of the carrier protein ThiS. In vitro, sulfur can be provided by H(2)S. In Bacillus thuringiensis subsp. konkukian (strain 97-27), this protein is Thiazole synthase.